A 90-amino-acid chain; its full sequence is Small ribosomal subunit protein uS15 (90 aa).

The protein belongs to the universal ribosomal protein uS15 family. Part of the 30S ribosomal subunit. Forms a bridge to the 50S subunit in the 70S ribosome, contacting the 23S rRNA.

Functionally, one of the primary rRNA binding proteins, it binds directly to 16S rRNA where it helps nucleate assembly of the platform of the 30S subunit by binding and bridging several RNA helices of the 16S rRNA. Forms an intersubunit bridge (bridge B4) with the 23S rRNA of the 50S subunit in the ribosome. The chain is Small ribosomal subunit protein uS15 from Campylobacter concisus (strain 13826).